The following is a 114-amino-acid chain: Large ribosomal subunit protein bL19 (114 aa).

Belongs to the bacterial ribosomal protein bL19 family.

Its function is as follows. This protein is located at the 30S-50S ribosomal subunit interface and may play a role in the structure and function of the aminoacyl-tRNA binding site. The polypeptide is Large ribosomal subunit protein bL19 (rplS) (Listeria innocua serovar 6a (strain ATCC BAA-680 / CLIP 11262)).